The primary structure comprises 358 residues: Neuronal-specific septin-3 (358 aa).

Residues 1-10 show a composition bias toward basic and acidic residues; that stretch reads MSKGLPEART. The segment at 1 to 29 is disordered; that stretch reads MSKGLPEARTDTAMSELVPEPRPKPAVPM. The Septin-type G domain maps to 58–331; it reads TGFDFNIMVV…ETYRAKRLND (274 aa). The tract at residues 68–75 is G1 motif; that stretch reads GQSGLGKS. Residue 68–75 participates in GTP binding; sequence GQSGLGKS. A Phosphoserine modification is found at Ser-91. Thr-102 serves as a coordination point for GTP. The G3 motif stretch occupies residues 125–128; that stretch reads DTPG. The segment at 207 to 210 is G4 motif; the sequence is AKAD. GTP contacts are provided by residues 208–216, Gly-265, and Arg-280; that span reads KADTMTLEE.

This sequence belongs to the TRAFAC class TrmE-Era-EngA-EngB-Septin-like GTPase superfamily. Septin GTPase family. As to quaternary structure, septins polymerize into heterooligomeric protein complexes that form filaments, and can associate with cellular membranes, actin filaments and microtubules. GTPase activity is required for filament formation. In terms of processing, phosphorylated by PKG on serine residues. Phosphorylated by PKG on Ser-91. Brain-specific, with highest expression in the hippocampal CA3 region (at protein level).

It is found in the cytoplasm. The protein localises to the cytoskeleton. The protein resides in the synapse. Filament-forming cytoskeletal GTPase. May play a role in cytokinesis (Potential). This is Neuronal-specific septin-3 from Rattus norvegicus (Rat).